The following is a 151-amino-acid chain: SsrA-binding protein (151 aa).

Belongs to the SmpB family.

It localises to the cytoplasm. In terms of biological role, required for rescue of stalled ribosomes mediated by trans-translation. Binds to transfer-messenger RNA (tmRNA), required for stable association of tmRNA with ribosomes. tmRNA and SmpB together mimic tRNA shape, replacing the anticodon stem-loop with SmpB. tmRNA is encoded by the ssrA gene; the 2 termini fold to resemble tRNA(Ala) and it encodes a 'tag peptide', a short internal open reading frame. During trans-translation Ala-aminoacylated tmRNA acts like a tRNA, entering the A-site of stalled ribosomes, displacing the stalled mRNA. The ribosome then switches to translate the ORF on the tmRNA; the nascent peptide is terminated with the 'tag peptide' encoded by the tmRNA and targeted for degradation. The ribosome is freed to recommence translation, which seems to be the essential function of trans-translation. This Wolinella succinogenes (strain ATCC 29543 / DSM 1740 / CCUG 13145 / JCM 31913 / LMG 7466 / NCTC 11488 / FDC 602W) (Vibrio succinogenes) protein is SsrA-binding protein.